Reading from the N-terminus, the 323-residue chain is Ribosomal RNA small subunit methyltransferase H (323 aa).

S-adenosyl-L-methionine-binding positions include Ala-44–His-46, Asp-64, Tyr-91, Asp-112, and Gln-119.

It belongs to the methyltransferase superfamily. RsmH family.

The protein resides in the cytoplasm. It carries out the reaction cytidine(1402) in 16S rRNA + S-adenosyl-L-methionine = N(4)-methylcytidine(1402) in 16S rRNA + S-adenosyl-L-homocysteine + H(+). Functionally, specifically methylates the N4 position of cytidine in position 1402 (C1402) of 16S rRNA. The chain is Ribosomal RNA small subunit methyltransferase H from Nitratidesulfovibrio vulgaris (strain ATCC 29579 / DSM 644 / CCUG 34227 / NCIMB 8303 / VKM B-1760 / Hildenborough) (Desulfovibrio vulgaris).